The sequence spans 95 residues: Co-chaperonin GroES (95 aa).

The protein belongs to the GroES chaperonin family. In terms of assembly, heptamer of 7 subunits arranged in a ring. Interacts with the chaperonin GroEL.

The protein resides in the cytoplasm. Its function is as follows. Together with the chaperonin GroEL, plays an essential role in assisting protein folding. The GroEL-GroES system forms a nano-cage that allows encapsulation of the non-native substrate proteins and provides a physical environment optimized to promote and accelerate protein folding. GroES binds to the apical surface of the GroEL ring, thereby capping the opening of the GroEL channel. The protein is Co-chaperonin GroES of Bordetella bronchiseptica (strain ATCC BAA-588 / NCTC 13252 / RB50) (Alcaligenes bronchisepticus).